Reading from the N-terminus, the 121-residue chain is Small ribosomal subunit protein uS12c (121 aa).

This sequence belongs to the universal ribosomal protein uS12 family. As to quaternary structure, part of the 30S ribosomal subunit.

The protein localises to the plastid. It is found in the chloroplast. In terms of biological role, with S4 and S5 plays an important role in translational accuracy. Located at the interface of the 30S and 50S subunits. The sequence is that of Small ribosomal subunit protein uS12c (rps12) from Bigelowiella natans (Pedinomonas minutissima).